A 218-amino-acid chain; its full sequence is Phosphoglycolate phosphatase (218 aa).

Residue Asp-7 is the Nucleophile of the active site. Mg(2+) is bound by residues Asp-7, Asp-9, and Asp-167.

It belongs to the HAD-like hydrolase superfamily. CbbY/CbbZ/Gph/YieH family. The cofactor is Mg(2+).

It carries out the reaction 2-phosphoglycolate + H2O = glycolate + phosphate. Its pathway is organic acid metabolism; glycolate biosynthesis; glycolate from 2-phosphoglycolate: step 1/1. In terms of biological role, specifically catalyzes the dephosphorylation of 2-phosphoglycolate. Is involved in the dissimilation of the intracellular 2-phosphoglycolate formed during the DNA repair of 3'-phosphoglycolate ends, a major class of DNA lesions induced by oxidative stress. The sequence is that of Phosphoglycolate phosphatase from Cereibacter sphaeroides (strain ATCC 17029 / ATH 2.4.9) (Rhodobacter sphaeroides).